The primary structure comprises 158 residues: NADH-quinone oxidoreductase subunit B (158 aa).

[4Fe-4S] cluster-binding residues include Cys37, Cys38, Cys102, and Cys132.

It belongs to the complex I 20 kDa subunit family. NDH-1 is composed of 14 different subunits. Subunits NuoB, C, D, E, F, and G constitute the peripheral sector of the complex. It depends on [4Fe-4S] cluster as a cofactor.

The protein localises to the cell inner membrane. It carries out the reaction a quinone + NADH + 5 H(+)(in) = a quinol + NAD(+) + 4 H(+)(out). In terms of biological role, NDH-1 shuttles electrons from NADH, via FMN and iron-sulfur (Fe-S) centers, to quinones in the respiratory chain. Couples the redox reaction to proton translocation (for every two electrons transferred, four hydrogen ions are translocated across the cytoplasmic membrane), and thus conserves the redox energy in a proton gradient. This is NADH-quinone oxidoreductase subunit B from Hydrogenovibrio crunogenus (strain DSM 25203 / XCL-2) (Thiomicrospira crunogena).